A 66-amino-acid chain; its full sequence is Small ribosomal subunit protein bS21A (66 aa).

Basic residues predominate over residues 34–46 (KHYEKPSVKKKRK). Positions 34–66 (KHYEKPSVKKKRKQMEAERKRRKAQRFRKPDRD) are disordered.

It belongs to the bacterial ribosomal protein bS21 family.

The sequence is that of Small ribosomal subunit protein bS21A from Geobacter sulfurreducens (strain ATCC 51573 / DSM 12127 / PCA).